We begin with the raw amino-acid sequence, 857 residues long: Median body protein (857 aa).

Coiled-coil stretches lie at residues 169–546 (HNAL…MRTE) and 571–793 (LAHL…TKAM).

The protein resides in the cytoplasm. The protein localises to the cytoskeleton. Functionally, structural component of the ventral disk involved in maintanance of a domed conformation of the disk required for proper attachment. May have a role in immobilizing the microtubules between cell divisions. In Giardia intestinalis (strain ATCC 50803 / WB clone C6) (Giardia lamblia), this protein is Median body protein.